Reading from the N-terminus, the 943-residue chain is MQDKIVIHGARAHNLKNIDVEIPRDKLVVVTGLSGSGKSSLAFDTLYAEGQRRYVESLSAYARQFLGNMEKPDVDAIDGLSPAISIDQKTTSKNPRSTVGTTTEINDYLRLLYARVGTPYCINGHGAINASSVEQIVDKVLELPERQRLQILAPVIRKKKGQHKSVIEKVQKDGYVRVRVDGEVYDVTEVPELSKSKQHNIDVVVDRIVIKEGIRSRLFDSIEAALRIAEGYVIIDTMDDSELLFSEHYACPVCGFTVPELEPRLFSFNAPFGSCSECDGLGIKLEVDTDLVVPDASKTLREGALAPWNPISSNYYPNMLEQAMKVFGVAMDKPFEDLSEEDKNLILYGSDGKEFHFHYENEFGGVRDIDIPFEGVINNIKRRYHETNSDYTRTQMRLYMNELTCGTCQGYRLNDQALSVRVGGQQGPHIGEISDLSIADHLDLVSQLTLSENEAIIARPILKEIKDRLTFLNNVGLNYLTLSRSAGTLSGGESQRIRLATQIGSNLSGVLYILDEPSIGLHQRDNDRLIASLKKMRDLGNTLIVVEHDEDTMREADYLIDVGPGAGVFGGEIVAAGTPKQVARNSKSITGQYLSGKRVIPVPEERRVGNGRFIEVIGARENNLQNVTARFPLGKFIAVTGVSGSGKSTLINSILKKAIAQKLNRNSDKPGKFKTITGIEHVDRLIDIDQSPIGRTPRSNPATYTGVFDDIRDLFAQTNEAKIRGYKKGRFSFNVKGGRCEACSGDGIIKIEMHFLPDVYVACEVCHGTRYNSETLEVHYKEKNISQVLDMTVNDAVEFFQHIPKIQRKLQTIKDVGLGYVTLGQPATTLSGGEAQRMKLASELHKRSTGKSFYILDEPTTGLHTEDIARLLKVLARFVDDGNTVLVIEHNLDVIKTADHIIDLGPEGGVGGGTIIVTGTPEEVAANEASYTGHYLKGKLHHE.

32 to 39 serves as a coordination point for ATP; sequence GLSGSGKS. The C4-type zinc-finger motif lies at 251 to 278; the sequence is CPVCGFTVPELEPRLFSFNAPFGSCSEC. ABC transporter domains are found at residues 308–589 and 609–937; these read WNPI…SKSI and GNGR…HYLK. Residue 641-648 participates in ATP binding; the sequence is GVSGSGKS. The C4-type zinc-finger motif lies at 740–766; it reads CEACSGDGIIKIEMHFLPDVYVACEVC.

The protein belongs to the ABC transporter superfamily. UvrA family. As to quaternary structure, forms a heterotetramer with UvrB during the search for lesions.

It is found in the cytoplasm. The UvrABC repair system catalyzes the recognition and processing of DNA lesions. UvrA is an ATPase and a DNA-binding protein. A damage recognition complex composed of 2 UvrA and 2 UvrB subunits scans DNA for abnormalities. When the presence of a lesion has been verified by UvrB, the UvrA molecules dissociate. This chain is UvrABC system protein A, found in Streptococcus pneumoniae serotype 4 (strain ATCC BAA-334 / TIGR4).